The chain runs to 451 residues: Tubulin alpha chain (451 aa).

Residue Q11 participates in GTP binding. An N6-acetyllysine modification is found at K40. The GTP site is built by E71, G144, T145, T179, N206, and N228. Position 71 (E71) interacts with Mg(2+). Residue E254 is part of the active site.

Belongs to the tubulin family. As to quaternary structure, dimer of alpha and beta chains. A typical microtubule is a hollow water-filled tube with an outer diameter of 25 nm and an inner diameter of 15 nM. Alpha-beta heterodimers associate head-to-tail to form protofilaments running lengthwise along the microtubule wall with the beta-tubulin subunit facing the microtubule plus end conferring a structural polarity. Microtubules usually have 13 protofilaments but different protofilament numbers can be found in some organisms and specialized cells. It depends on Mg(2+) as a cofactor. In terms of processing, undergoes a tyrosination/detyrosination cycle, the cyclic removal and re-addition of a C-terminal tyrosine residue by the enzymes tubulin tyrosine carboxypeptidase (TTCP) and tubulin tyrosine ligase (TTL), respectively. Acetylation of alpha chains at Lys-40 stabilizes microtubules and affects affinity and processivity of microtubule motors. This modification has a role in multiple cellular functions, ranging from cell motility, cell cycle progression or cell differentiation to intracellular trafficking and signaling.

Its subcellular location is the cytoplasm. It is found in the cytoskeleton. The catalysed reaction is GTP + H2O = GDP + phosphate + H(+). Tubulin is the major constituent of microtubules, a cylinder consisting of laterally associated linear protofilaments composed of alpha- and beta-tubulin heterodimers. Microtubules grow by the addition of GTP-tubulin dimers to the microtubule end, where a stabilizing cap forms. Below the cap, tubulin dimers are in GDP-bound state, owing to GTPase activity of alpha-tubulin. The protein is Tubulin alpha chain (TUBA) of Chlorella vulgaris (Green alga).